The sequence spans 185 residues: Ribosome-recycling factor (185 aa).

This sequence belongs to the RRF family.

It localises to the cytoplasm. Its function is as follows. Responsible for the release of ribosomes from messenger RNA at the termination of protein biosynthesis. May increase the efficiency of translation by recycling ribosomes from one round of translation to another. The sequence is that of Ribosome-recycling factor from Pseudomonas fluorescens (strain SBW25).